A 356-amino-acid chain; its full sequence is DNA integrity scanning protein DisA (356 aa).

The 139-residue stretch at 11-149 (VHTMRDTLQR…EGKSHILEEP (139 aa)) folds into the DAC domain. ATP-binding positions include G78, L96, and 109 to 113 (TRHRS).

Belongs to the DisA family. As to quaternary structure, homooctamer. Mg(2+) serves as cofactor.

The enzyme catalyses 2 ATP = 3',3'-c-di-AMP + 2 diphosphate. In terms of biological role, participates in a DNA-damage check-point. DisA forms globular foci that rapidly scan along the chromosomes searching for lesions. Functionally, also has diadenylate cyclase activity, catalyzing the condensation of 2 ATP molecules into cyclic di-AMP (c-di-AMP). c-di-AMP likely acts as a signaling molecule that may couple DNA integrity with a cellular process. In Corynebacterium efficiens (strain DSM 44549 / YS-314 / AJ 12310 / JCM 11189 / NBRC 100395), this protein is DNA integrity scanning protein DisA.